Here is a 573-residue protein sequence, read N- to C-terminus: Sulfate adenylyltransferase (573 aa).

The tract at residues 1-169 (MSNPPHGGVL…LEAVNKLQHY (169 aa)) is N-terminal. The catalytic stretch occupies residues 170 to 394 (DFVDLRYSPA…LRESHPPRSQ (225 aa)). Glutamine 197 is a sulfate binding site. Residues 197 to 200 (QTRN) and 291 to 294 (GRDH) each bind ATP. Residues threonine 198, arginine 199, and asparagine 200 contribute to the active site. Residue arginine 199 participates in sulfate binding. Alanine 295 serves as a coordination point for sulfate. Methionine 333 lines the ATP pocket. The interval 395–573 (QGFTVLFTGY…LESQGLLDRF (179 aa)) is allosteric regulation domain; adenylyl-sulfate kinase-like. Residues 434–437 (ENIR), arginine 451, 477–478 (IA), and arginine 515 each bind 3'-phosphoadenylyl sulfate.

In the N-terminal section; belongs to the sulfate adenylyltransferase family. This sequence in the C-terminal section; belongs to the APS kinase family. In terms of assembly, homohexamer. Dimer of trimers.

It localises to the cytoplasm. The catalysed reaction is sulfate + ATP + H(+) = adenosine 5'-phosphosulfate + diphosphate. Its pathway is sulfur metabolism; hydrogen sulfide biosynthesis; sulfite from sulfate: step 1/3. With respect to regulation, allosterically inhibited by 3'-phosphoadenosine 5'-phosphosulfate (PAPS). In terms of biological role, catalyzes the first intracellular reaction of sulfate assimilation, forming adenosine-5'-phosphosulfate (APS) from inorganic sulfate and ATP. Plays an important role in sulfate activation as a component of the biosynthesis pathway of sulfur-containing amino acids. The protein is Sulfate adenylyltransferase (cys-11) of Neurospora crassa (strain ATCC 24698 / 74-OR23-1A / CBS 708.71 / DSM 1257 / FGSC 987).